Here is a 100-residue protein sequence, read N- to C-terminus: NADH-quinone oxidoreductase subunit K (100 aa).

The next 3 helical transmembrane spans lie at threonine 4 to serine 24, leucine 28 to alanine 48, and isoleucine 60 to valine 80.

Belongs to the complex I subunit 4L family. In terms of assembly, NDH-1 is composed of 13 different subunits. Subunits NuoA, H, J, K, L, M, N constitute the membrane sector of the complex.

The protein localises to the cell inner membrane. The enzyme catalyses a quinone + NADH + 5 H(+)(in) = a quinol + NAD(+) + 4 H(+)(out). Its function is as follows. NDH-1 shuttles electrons from NADH, via FMN and iron-sulfur (Fe-S) centers, to quinones in the respiratory chain. The immediate electron acceptor for the enzyme in this species is believed to be ubiquinone. Couples the redox reaction to proton translocation (for every two electrons transferred, four hydrogen ions are translocated across the cytoplasmic membrane), and thus conserves the redox energy in a proton gradient. This Shewanella woodyi (strain ATCC 51908 / MS32) protein is NADH-quinone oxidoreductase subunit K.